The chain runs to 626 residues: Probable metalloendopeptidase G1-type (626 aa).

A Zn(2+)-binding site is contributed by histidine 42. Glutamate 45 is a catalytic residue. Residue histidine 46 participates in Zn(2+) binding.

Belongs to the peptidase M44 family. It depends on Zn(2+) as a cofactor.

Seems to be involved in viral proteins maturation by cleavage at Ala-Gly-|-Xaa motifs. The sequence is that of Probable metalloendopeptidase G1-type from Fowlpox virus (strain NVSL) (FPV).